We begin with the raw amino-acid sequence, 29 residues long: Cyclotide mela-4 (29 aa).

Positions 1–29 (GKPICGETCFKGKCYTPGCTCSYPICKKN) form a cross-link, cyclopeptide (Gly-Asn). Intrachain disulfides connect Cys-5/Cys-19, Cys-9/Cys-21, and Cys-14/Cys-26.

This is a cyclic peptide. In terms of processing, contains 3 disulfide bonds.

In terms of biological role, probably participates in a plant defense mechanism (Potential). Binds to and induces leakage in phospholipd membranes, particularly ones containing 1-palmitoyl-2-oleophosphatidylethanolamine (POPE). In vitro, displays cytotoxicity against cultured cells. Not active against Gram-negative bacterium E.coli ATCC 25922 or Gram-positive bacterium S.aureus ATCC 25923 up to a concentration of 64 uM. This is Cyclotide mela-4 from Melicytus latifolius (Norfolk Island mahoe).